We begin with the raw amino-acid sequence, 431 residues long: Tol-Pal system protein TolB (431 aa).

Residues 1 to 26 form the signal peptide; it reads MSLMTKLGFRALVASCLITAGSAANA. A disordered region spans residues 411 to 431; that stretch reads PQILSVQGGSVREPSWGPFMQ.

This sequence belongs to the TolB family. As to quaternary structure, the Tol-Pal system is composed of five core proteins: the inner membrane proteins TolA, TolQ and TolR, the periplasmic protein TolB and the outer membrane protein Pal. They form a network linking the inner and outer membranes and the peptidoglycan layer.

The protein resides in the periplasm. Part of the Tol-Pal system, which plays a role in outer membrane invagination during cell division and is important for maintaining outer membrane integrity. This Burkholderia lata (strain ATCC 17760 / DSM 23089 / LMG 22485 / NCIMB 9086 / R18194 / 383) protein is Tol-Pal system protein TolB.